We begin with the raw amino-acid sequence, 632 residues long: Eukaryotic peptide chain release factor GTP-binding subunit ERF3B (632 aa).

Disordered stretches follow at residues 1–31 (MDLG…GDGI) and 162–200 (SEAK…SIPS). The span at 178-192 (ESVKEVMEEKEEVRK) shows a compositional bias: basic and acidic residues. A tr-type G domain is found at 205–429 (KEHVNVVFIG…YLDSLPNFNR (225 aa)). Residues 214-221 (GHVDAGKS) form a G1 region. 217-222 (DAGKST) is a binding site for GTP. The segment at 270–274 (GKTVE) is G2. Positions 291–294 (DAPG) are G3. Residues 353-356 (NKMD) and 395-397 (SGL) contribute to the GTP site. A G4 region spans residues 353–356 (NKMD). The tract at residues 395–397 (SGL) is G5.

It belongs to the TRAFAC class translation factor GTPase superfamily. Classic translation factor GTPase family. ERF3 subfamily. As to quaternary structure, component of the eRF1-eRF3-GTP ternary complex, composed of ETF1/ERF1 and ERF3 (GSPT1/ERF3A or GSPT2/ERF3B) and GTP. Component of the transient SURF (SMG1-UPF1-eRF1-eRF3) complex. Interacts with UPF1 and PABPC1. In terms of tissue distribution, highly expressed in brain. Moderately expressed in spleen and lung. Weakly expressed in heart, liver and kidney. Expression during the cell-cycle progression is constant.

It is found in the cytoplasm. The enzyme catalyses GTP + H2O = GDP + phosphate + H(+). GTPase component of the eRF1-eRF3-GTP ternary complex, a ternary complex that mediates translation termination in response to the termination codons UAA, UAG and UGA. GSPT2/ERF3B mediates ETF1/ERF1 delivery to stop codons: The eRF1-eRF3-GTP complex binds to a stop codon in the ribosomal A-site. GTP hydrolysis by GSPT2/ERF3B induces a conformational change that leads to its dissociation, permitting ETF1/ERF1 to accommodate fully in the A-site. Component of the transient SURF complex which recruits UPF1 to stalled ribosomes in the context of nonsense-mediated decay (NMD) of mRNAs containing premature stop codons. The polypeptide is Eukaryotic peptide chain release factor GTP-binding subunit ERF3B (Gspt2) (Mus musculus (Mouse)).